The primary structure comprises 346 residues: Angiopoietin-related protein 7 (346 aa).

The signal sequence occupies residues 1 to 26; the sequence is MLKKPLSAVTWLCIFIVAFVSHPAWL. Positions 39–119 form a coiled coil; it reads QLKAANCCEE…DIMQLQAAQT (81 aa). N58 carries an N-linked (GlcNAc...) asparagine glycan. Positions 122 to 343 constitute a Fibrinogen C-terminal domain; it reads QTSADAIYDC…RVEMKIRPED (222 aa). Residues C131 and C162 are joined by a disulfide bond. N-linked (GlcNAc...) asparagine glycans are attached at residues N253 and N267. A disulfide bridge connects residues C285 and C298.

In terms of assembly, homotetramer; disulfide-linked. Highly expressed in the cornea (at protein level). Expression is restricted to the stromal layer. Also detected at the junction between the corneal stromal layer and the conjuctiva. Not detected in the sclera.

The protein localises to the secreted. Its function is as follows. Has a role in the formation and organization of the extracellular matrix. In the eye, it functions as a mediator of dexamethasone-induced matrix deposition in the trabecular meshwork, the tissue responsible for the outflow of the ocular aqueous humor and for the maintenance of intraocular pressure. Is a negative regulator of angiogenesis in the cornea, and plays a major role in maintaining corneal avascularity and transparency. The chain is Angiopoietin-related protein 7 (ANGPTL7) from Homo sapiens (Human).